The sequence spans 260 residues: Pyridoxine 5'-phosphate synthase (260 aa).

Asn15 lines the 3-amino-2-oxopropyl phosphate pocket. 17-18 (DH) provides a ligand contact to 1-deoxy-D-xylulose 5-phosphate. Arg26 contacts 3-amino-2-oxopropyl phosphate. His51 functions as the Proton acceptor in the catalytic mechanism. 2 residues coordinate 1-deoxy-D-xylulose 5-phosphate: Arg53 and His58. Glu78 serves as the catalytic Proton acceptor. Residue Thr108 participates in 1-deoxy-D-xylulose 5-phosphate binding. Catalysis depends on His199, which acts as the Proton donor. 3-amino-2-oxopropyl phosphate-binding positions include Gly200 and 221–222 (GH).

This sequence belongs to the PNP synthase family. As to quaternary structure, homooctamer; tetramer of dimers.

It localises to the cytoplasm. The enzyme catalyses 3-amino-2-oxopropyl phosphate + 1-deoxy-D-xylulose 5-phosphate = pyridoxine 5'-phosphate + phosphate + 2 H2O + H(+). The protein operates within cofactor biosynthesis; pyridoxine 5'-phosphate biosynthesis; pyridoxine 5'-phosphate from D-erythrose 4-phosphate: step 5/5. Its function is as follows. Catalyzes the complicated ring closure reaction between the two acyclic compounds 1-deoxy-D-xylulose-5-phosphate (DXP) and 3-amino-2-oxopropyl phosphate (1-amino-acetone-3-phosphate or AAP) to form pyridoxine 5'-phosphate (PNP) and inorganic phosphate. The protein is Pyridoxine 5'-phosphate synthase of Cupriavidus necator (strain ATCC 17699 / DSM 428 / KCTC 22496 / NCIMB 10442 / H16 / Stanier 337) (Ralstonia eutropha).